Consider the following 187-residue polypeptide: UPF0200 protein MM_1313 (187 aa).

9–16 (GMPASGKS) lines the ATP pocket.

Belongs to the UPF0200 family.

The chain is UPF0200 protein MM_1313 from Methanosarcina mazei (strain ATCC BAA-159 / DSM 3647 / Goe1 / Go1 / JCM 11833 / OCM 88) (Methanosarcina frisia).